We begin with the raw amino-acid sequence, 83 residues long: Small ribosomal subunit protein bS20 (83 aa).

The disordered stretch occupies residues 1 to 21 (MPNIKSAIKRVRTTETAEERN). Basic and acidic residues predominate over residues 12-21 (RTTETAEERN).

Belongs to the bacterial ribosomal protein bS20 family.

In terms of biological role, binds directly to 16S ribosomal RNA. The polypeptide is Small ribosomal subunit protein bS20 (Staphylococcus epidermidis (strain ATCC 35984 / DSM 28319 / BCRC 17069 / CCUG 31568 / BM 3577 / RP62A)).